Consider the following 77-residue polypeptide: Conotoxin Vc1 (77 aa).

The signal sequence occupies residues 1-22 (MRTSGRLLLLCLAVGLLLESQA). 2 consecutive propeptides follow at residues 23 to 58 (HPNA…KGQR) and 73 to 77 (RRSFY).

The protein belongs to the conotoxin H superfamily. Expressed by the venom duct.

It localises to the secreted. Functionally, probable toxin. This Conus victoriae (Queen Victoria cone) protein is Conotoxin Vc1.